The primary structure comprises 152 residues: Acidic phospholipase A2 57 (152 aa).

Positions 1–21 (MYPAHLLGLLAVCVSLLGAAS) are cleaved as a signal peptide. Residues 22-27 (IPPLPL) constitute a propeptide that is removed on maturation. 7 disulfides stabilise this stretch: cysteine 38–cysteine 104, cysteine 54–cysteine 151, cysteine 56–cysteine 72, cysteine 71–cysteine 132, cysteine 78–cysteine 125, cysteine 88–cysteine 118, and cysteine 111–cysteine 123. Ca(2+) is bound by residues tyrosine 55, glycine 57, and glycine 59. Histidine 75 is a catalytic residue. Residue aspartate 76 coordinates Ca(2+). Aspartate 126 is an active-site residue.

The protein belongs to the phospholipase A2 family. Group I subfamily. D49 sub-subfamily. Ca(2+) is required as a cofactor. As to expression, expressed by the venom gland.

The protein resides in the secreted. It carries out the reaction a 1,2-diacyl-sn-glycero-3-phosphocholine + H2O = a 1-acyl-sn-glycero-3-phosphocholine + a fatty acid + H(+). Its function is as follows. PLA2 catalyzes the calcium-dependent hydrolysis of the 2-acyl groups in 3-sn-phosphoglycerides. The protein is Acidic phospholipase A2 57 of Hydrophis hardwickii (Hardwick's spine-bellied seasnake).